Here is a 656-residue protein sequence, read N- to C-terminus: Probable Xaa-Pro aminopeptidase P (656 aa).

4 residues coordinate Mn(2+): Asp453, Asp464, Glu562, and Glu576.

This sequence belongs to the peptidase M24B family. The cofactor is Mn(2+).

It carries out the reaction Release of any N-terminal amino acid, including proline, that is linked to proline, even from a dipeptide or tripeptide.. Catalyzes the removal of a penultimate prolyl residue from the N-termini of peptides. This is Probable Xaa-Pro aminopeptidase P (ampp) from Pyrenophora teres f. teres (strain 0-1) (Barley net blotch fungus).